Reading from the N-terminus, the 216-residue chain is NKG2-D type II integral membrane protein (216 aa).

Over 1-51 (MGWIRGRRSRHSWEMSEFHNYNLDLKKSDFSTRWQKQRCPVVKSKCRENAS) the chain is Cytoplasmic. The helical; Signal-anchor for type II membrane protein transmembrane segment at 52 to 72 (PFFFCCFIAVAMGIRFIIMVT) threads the bilayer. Residues 73-216 (IWSAVFLNSL…NTYICMQRTV (144 aa)) lie on the Extracellular side of the membrane. Intrachain disulfides connect Cys-96–Cys-105 and Cys-99–Cys-110. Residues 98 to 213 (PCPKNWICYK…STPNTYICMQ (116 aa)) form the C-type lectin domain. Asn-115, Asn-131, Asn-163, and Asn-202 each carry an N-linked (GlcNAc...) asparagine glycan. Intrachain disulfides connect Cys-127/Cys-211 and Cys-189/Cys-203.

In terms of assembly, homodimer; disulfide-linked. Heterohexamer composed of two subunits of KLRK1 and four subunits of HCST/DAP10. Interacts (via transmembrane domain) with HCST/DAP10 (via transmembrane domain); the interaction is required for KLRK1 NK cell surface and induces NK cell-mediated cytotoxicity. Can form disulfide-bonded heterodimer with CD94. Interacts with CEACAM1; recruits PTPN6 that dephosphorylates VAV1. As to expression, natural killer cells.

The protein resides in the cell membrane. In terms of biological role, functions as an activating and costimulatory receptor involved in immunosurveillance upon binding to various cellular stress-inducible ligands displayed at the surface of autologous tumor cells and virus-infected cells. Provides both stimulatory and costimulatory innate immune responses on activated killer (NK) cells, leading to cytotoxic activity. Acts as a costimulatory receptor for T-cell receptor (TCR) in CD8(+) T-cell-mediated adaptive immune responses by amplifying T-cell activation. Stimulates perforin-mediated elimination of ligand-expressing tumor cells. Signaling involves calcium influx, culminating in the expression of TNF-alpha. Participates in NK cell-mediated bone marrow graft rejection. May play a regulatory role in differentiation and survival of NK cells. Binds to ligands belonging to various subfamilies of MHC class I-related glycoproteins. This is NKG2-D type II integral membrane protein (KLRK1) from Pan troglodytes (Chimpanzee).